We begin with the raw amino-acid sequence, 46 residues long: Transcriptional regulator SEHBP (46 aa).

Interacts with histone H2B. Also interacts with chromatin-binding proteins HMGN1 and HMGN3.

It localises to the nucleus. The protein localises to the cytoplasm. Its function is as follows. Plays a role in transcription regulation. This chain is Transcriptional regulator SEHBP, found in Homo sapiens (Human).